The sequence spans 284 residues: Type II methyltransferase M1.DpnII (284 aa).

S-adenosyl-L-methionine contacts are provided by W17, K21, G46, D62, D177, F178, and D194.

This sequence belongs to the N(4)/N(6)-methyltransferase family. Monomer. Homodimer.

It carries out the reaction a 2'-deoxyadenosine in DNA + S-adenosyl-L-methionine = an N(6)-methyl-2'-deoxyadenosine in DNA + S-adenosyl-L-homocysteine + H(+). In terms of biological role, an alpha subtype methylase that recognizes the double-stranded sequence 5'-GATC-3', methylates A-2 on both strands, and protects the DNA from cleavage by the DpnII endonuclease. The protein is Type II methyltransferase M1.DpnII of Streptococcus pneumoniae.